Reading from the N-terminus, the 385-residue chain is 8-amino-7-oxononanoate synthase (385 aa).

Residue Arg-21 coordinates substrate. 108–109 (GF) is a binding site for pyridoxal 5'-phosphate. His-133 is a binding site for substrate. Pyridoxal 5'-phosphate-binding residues include Ser-179, His-207, and Thr-233. Lys-236 carries the N6-(pyridoxal phosphate)lysine modification. Substrate is bound at residue Thr-352.

This sequence belongs to the class-II pyridoxal-phosphate-dependent aminotransferase family. BioF subfamily. In terms of assembly, homodimer. Pyridoxal 5'-phosphate is required as a cofactor.

The enzyme catalyses 6-carboxyhexanoyl-[ACP] + L-alanine + H(+) = (8S)-8-amino-7-oxononanoate + holo-[ACP] + CO2. It functions in the pathway cofactor biosynthesis; biotin biosynthesis. Catalyzes the decarboxylative condensation of pimeloyl-[acyl-carrier protein] and L-alanine to produce 8-amino-7-oxononanoate (AON), [acyl-carrier protein], and carbon dioxide. The polypeptide is 8-amino-7-oxononanoate synthase (Salmonella paratyphi C (strain RKS4594)).